The primary structure comprises 436 residues: UDP-N-acetylglucosamine 1-carboxyvinyltransferase (436 aa).

Residue 22-23 (KN) coordinates phosphoenolpyruvate. Arginine 96 contacts UDP-N-acetyl-alpha-D-glucosamine. Cysteine 120 (proton donor) is an active-site residue. 2-(S-cysteinyl)pyruvic acid O-phosphothioketal is present on cysteine 120. UDP-N-acetyl-alpha-D-glucosamine-binding positions include 125–129 (RPIDL), aspartate 309, and isoleucine 331.

This sequence belongs to the EPSP synthase family. MurA subfamily.

Its subcellular location is the cytoplasm. It catalyses the reaction phosphoenolpyruvate + UDP-N-acetyl-alpha-D-glucosamine = UDP-N-acetyl-3-O-(1-carboxyvinyl)-alpha-D-glucosamine + phosphate. Its pathway is cell wall biogenesis; peptidoglycan biosynthesis. Its function is as follows. Cell wall formation. Adds enolpyruvyl to UDP-N-acetylglucosamine. The protein is UDP-N-acetylglucosamine 1-carboxyvinyltransferase of Acidobacterium capsulatum (strain ATCC 51196 / DSM 11244 / BCRC 80197 / JCM 7670 / NBRC 15755 / NCIMB 13165 / 161).